We begin with the raw amino-acid sequence, 186 residues long: Threonylcarbamoyl-AMP synthase (186 aa).

Residues 5 to 186 (LLTIKAAAKL…WEAQTQKRLR (182 aa)) form the YrdC-like domain.

Belongs to the SUA5 family. TsaC subfamily.

It localises to the cytoplasm. The catalysed reaction is L-threonine + hydrogencarbonate + ATP = L-threonylcarbamoyladenylate + diphosphate + H2O. Functionally, required for the formation of a threonylcarbamoyl group on adenosine at position 37 (t(6)A37) in tRNAs that read codons beginning with adenine. Catalyzes the conversion of L-threonine, HCO(3)(-)/CO(2) and ATP to give threonylcarbamoyl-AMP (TC-AMP) as the acyladenylate intermediate, with the release of diphosphate. The polypeptide is Threonylcarbamoyl-AMP synthase (Hydrogenovibrio crunogenus (strain DSM 25203 / XCL-2) (Thiomicrospira crunogena)).